A 1165-amino-acid polypeptide reads, in one-letter code: Activity-dependent neuroprotector homeobox protein 2 (1165 aa).

The C2H2-type 1 zinc-finger motif lies at 73 to 96 (YCCSLCRYSTKVLTSLKNHLHRYH). A C2H2-type 2; degenerate zinc finger spans residues 106–128 (IPCPNCPFSSQPRVVGKHFRMFH). A Glycyl lysine isopeptide (Lys-Gly) (interchain with G-Cter in SUMO2) cross-link involves residue Lys-146. Residues 155–178 (FTCLKCNFSNTLYYSMKKHVLVAH) form a C2H2-type 3; degenerate zinc finger. Residues 215-240 (YYCKKCSAIASSQDALMYHILTSDAH) form a C2H2-type 4 zinc finger. Positions 303–318 (SGTVQSVTVTPGTSGS) are enriched in low complexity. A disordered region spans residues 303-327 (SGTVQSVTVTPGTSGSLTHSPPTTA). The C2H2-type 5; degenerate zinc-finger motif lies at 696-718 (KTCPVCNELFPSNVYQVHMEVAH). The C2H2-type 6; degenerate zinc-finger motif lies at 724-746 (QLCQVCNELFPANVYQVHMEVAH). Residues 777 to 798 (VRCLSCKCLVSQEELMHHLLMH) form a C2H2-type 7; degenerate zinc finger. 2 consecutive C2H2-type zinc fingers follow at residues 800 to 823 (LGCL…RTKH) and 905 to 935 (LTCP…PTVH). Residues 1005-1068 (PVKRKLPEGH…SGPSEDSLQA (64 aa)) are disordered. Residues Lys-1009 and Lys-1048 each participate in a glycyl lysine isopeptide (Lys-Gly) (interchain with G-Cter in SUMO2) cross-link. The segment covering 1009 to 1024 (KLPEGHLGPEDQRDGE) has biased composition (basic and acidic residues). The segment at residues 1090–1132 (DYFHRRPYPSRKEVELLSSLLWVWKIDVASFFGKRRYICMKAI) is a DNA-binding region (homeobox).

This sequence belongs to the krueppel C2H2-type zinc-finger protein family. May interact with SMARCA4/BRG1. As to expression, expressed widely, with the highest level in the brain.

The protein localises to the nucleus. Its function is as follows. May be involved in transcriptional regulation. May play a role in neuronal function; perhaps involved in protection of brain tissues from oxidative stress. May be involved in erythroid differentiation. This Mus musculus (Mouse) protein is Activity-dependent neuroprotector homeobox protein 2 (Adnp2).